Consider the following 952-residue polypeptide: Protein translocase subunit SecA (952 aa).

ATP is bound by residues Q135, 153–157, and D575; that span reads GEGKT. Residues 614-624 show a composition bias toward basic and acidic residues; the sequence is RHESRRIDNQL. Disordered stretches follow at residues 614-636 and 916-946; these read RHES…DPGS and VSAK…GKKY. Zn(2+) is bound by residues C938, C940, C949, and C950.

The protein belongs to the SecA family. In terms of assembly, monomer and homodimer. Part of the essential Sec protein translocation apparatus which comprises SecA, SecYEG and auxiliary proteins SecDF. Other proteins may also be involved. Zn(2+) serves as cofactor.

The protein resides in the cell membrane. It localises to the cytoplasm. It catalyses the reaction ATP + H2O + cellular proteinSide 1 = ADP + phosphate + cellular proteinSide 2.. Functionally, part of the Sec protein translocase complex. Interacts with the SecYEG preprotein conducting channel. Has a central role in coupling the hydrolysis of ATP to the transfer of proteins into and across the cell membrane, serving as an ATP-driven molecular motor driving the stepwise translocation of polypeptide chains across the membrane. The polypeptide is Protein translocase subunit SecA (Dehalococcoides mccartyi (strain ATCC BAA-2100 / JCM 16839 / KCTC 5957 / BAV1)).